The chain runs to 164 residues: General odorant-binding protein 1 (164 aa).

Residues 1-19 form the signal peptide; the sequence is MPGVLRALLLLAAAAPLLA. 3 disulfides stabilise this stretch: Cys38-Cys73, Cys69-Cys127, and Cys116-Cys136.

The protein belongs to the PBP/GOBP family. In terms of tissue distribution, antenna.

Functionally, present in the aqueous fluid surrounding olfactory sensory dendrites and are thought to aid in the capture and transport of hydrophobic odorants into and through this fluid. The protein is General odorant-binding protein 1 of Heliothis virescens (Tobacco budworm moth).